Reading from the N-terminus, the 626-residue chain is Chaperone protein DnaK (626 aa).

Thr-175 is subject to Phosphothreonine; by autocatalysis. A compositionally biased stretch (low complexity) spans 586-606 (GAEGAAAGADGAGASAGSASG). Residues 586–626 (GAEGAAAGADGAGASAGSASGSDDDTVEAEVVDDDDDKDNK) form a disordered region. Over residues 607 to 626 (SDDDTVEAEVVDDDDDKDNK) the composition is skewed to acidic residues.

This sequence belongs to the heat shock protein 70 family.

Acts as a chaperone. This is Chaperone protein DnaK from Bifidobacterium longum (strain DJO10A).